Consider the following 132-residue polypeptide: Major pollen allergen Art v 1 (132 aa).

The first 24 residues, 1-24 (MAKCSYVFCAVLLIFIVAIGEMEA), serve as a signal peptide directing secretion. The interval 28-77 (KLCEKTSKTYSGKCDNKKCDKKCIEWEKAQHGACHKREAGKESCFCYFDC) is defensin-like domain. 4 disulfide bridges follow: C30–C77, C41–C61, C46–C71, and C50–C73. 2 epitope recognized by IgE antibodies of mugwort pollen-sensitized patients regions span residues 64–70 (REAGKES) and 79–87 (KSPPGATPA). Positions 81–132 (PPGATPAPPGAAPPPAAGGSPSPPADGGSPPPPADGGSPPVDGGSPPPPSTH) are disordered. A compositionally biased stretch (pro residues) spans 83–114 (GATPAPPGAAPPPAAGGSPSPPADGGSPPPPA). Positions 115–124 (DGGSPPVDGG) are enriched in low complexity.

The protein in the N-terminal section; belongs to the DEFL family. The mature protein extracted from the plant exhibits an average rate of 76% of hydroxyprolines. In terms of processing, O-glycosylated. O-linkage of 3 galactoses plus 9-16 or 21-23 arabinose residues attached on one or two hydroxyprolines.

Its subcellular location is the secreted. The chain is Major pollen allergen Art v 1 from Artemisia vulgaris (Mugwort).